Here is a 534-residue protein sequence, read N- to C-terminus: Beta-glucosidase 31 (534 aa).

A signal peptide spans 1–22 (MAIKLIALVITLCVASWDVAQG). Gln51 contacts a beta-D-glucoside. Asn68 is a glycosylation site (N-linked (GlcNAc...) asparagine). A beta-D-glucoside contacts are provided by residues His154 and 199–200 (NE). Residue Glu200 is the Proton donor of the active site. Cys219 and Cys227 are disulfide-bonded. Position 344 (Tyr344) interacts with a beta-D-glucoside. A glycan (N-linked (GlcNAc...) asparagine) is linked at Asn374. Residue Glu417 participates in a beta-D-glucoside binding. Glu417 (nucleophile) is an active-site residue. The N-linked (GlcNAc...) asparagine glycan is linked to Asn425. Residues Trp467, 474-475 (EW), and Phe483 each bind a beta-D-glucoside.

The protein belongs to the glycosyl hydrolase 1 family.

The enzyme catalyses Hydrolysis of terminal, non-reducing beta-D-glucosyl residues with release of beta-D-glucose.. The sequence is that of Beta-glucosidase 31 from Arabidopsis thaliana (Mouse-ear cress).